Reading from the N-terminus, the 454-residue chain is tRNA modification GTPase MnmE (454 aa).

(6S)-5-formyl-5,6,7,8-tetrahydrofolate contacts are provided by Arg23, Glu80, and Lys120. In terms of domain architecture, TrmE-type G spans 216-377; that stretch reads GMKVVIAGRP…LRNHLKQSMG (162 aa). Asn226 is a binding site for K(+). GTP contacts are provided by residues 226 to 231, 245 to 251, 270 to 273, 335 to 338, and 358 to 360; these read NAGKSS, TDIAGTT, DTAG, NKAD, and SAR. Residue Ser230 participates in Mg(2+) binding. Positions 245, 247, and 250 each coordinate K(+). Thr251 provides a ligand contact to Mg(2+). Lys454 contributes to the (6S)-5-formyl-5,6,7,8-tetrahydrofolate binding site.

This sequence belongs to the TRAFAC class TrmE-Era-EngA-EngB-Septin-like GTPase superfamily. TrmE GTPase family. As to quaternary structure, homodimer. Heterotetramer of two MnmE and two MnmG subunits. It depends on K(+) as a cofactor.

It localises to the cytoplasm. Its function is as follows. Exhibits a very high intrinsic GTPase hydrolysis rate. Involved in the addition of a carboxymethylaminomethyl (cmnm) group at the wobble position (U34) of certain tRNAs, forming tRNA-cmnm(5)s(2)U34. The chain is tRNA modification GTPase MnmE from Escherichia coli O139:H28 (strain E24377A / ETEC).